The following is a 714-amino-acid chain: Elongation factor G-like protein (714 aa).

The region spanning 21–289 (GGVRNVVLVG…VATRGFPSPM (269 aa)) is the tr-type G domain. The interval 30 to 37 (GPSGGGKT) is G1. 30–37 (GPSGGGKT) is a binding site for GTP. The interval 73-77 (QRSVG) is G2. The G3 stretch occupies residues 94-97 (DTPG). Residues 94-98 (DTPGY) and 148-151 (TKLD) each bind GTP. Residues 148–151 (TKLD) are G4. The interval 267 to 269 (CSS) is G5.

The protein belongs to the TRAFAC class translation factor GTPase superfamily. Classic translation factor GTPase family. EF-G/EF-2 subfamily.

In Mycobacterium tuberculosis (strain ATCC 25618 / H37Rv), this protein is Elongation factor G-like protein.